The primary structure comprises 357 residues: Biotin synthase (357 aa).

The segment at 1–27 is disordered; it reads MTTAETKPATETGENAGTTGTAGTAAT. Over residues 9 to 27 the composition is skewed to low complexity; the sequence is ATETGENAGTTGTAGTAAT. A Radical SAM core domain is found at 78 to 303; it reads DAVEMEGIIS…RQLLRFAGGR (226 aa). Positions 93, 97, and 100 each coordinate [4Fe-4S] cluster. Cysteine 136, cysteine 228, and arginine 298 together coordinate [2Fe-2S] cluster.

The protein belongs to the radical SAM superfamily. Biotin synthase family. In terms of assembly, homodimer. The cofactor is [4Fe-4S] cluster. [2Fe-2S] cluster is required as a cofactor.

The enzyme catalyses (4R,5S)-dethiobiotin + (sulfur carrier)-SH + 2 reduced [2Fe-2S]-[ferredoxin] + 2 S-adenosyl-L-methionine = (sulfur carrier)-H + biotin + 2 5'-deoxyadenosine + 2 L-methionine + 2 oxidized [2Fe-2S]-[ferredoxin]. The protein operates within cofactor biosynthesis; biotin biosynthesis; biotin from 7,8-diaminononanoate: step 2/2. Catalyzes the conversion of dethiobiotin (DTB) to biotin by the insertion of a sulfur atom into dethiobiotin via a radical-based mechanism. The chain is Biotin synthase from Corynebacterium jeikeium (strain K411).